The following is a 619-amino-acid chain: E3 ubiquitin-protein ligase DTX4 (619 aa).

WWE domains are found at residues 1–78 (MLLA…PVRR) and 79–155 (NYYD…RVRR). Disordered stretches follow at residues 238 to 281 (KPLD…PGPN) and 358 to 389 (PPPV…KGKT). The segment covering 261-273 (QASSMPTGTTMGS) has biased composition (polar residues). Residues 378–387 (KTTKKQAKKG) are compositionally biased toward basic residues. An RING-type; atypical zinc finger spans residues 409 to 468 (CTICMERLTAPSGYKGPQPTVKPDLVGKLSRCGHVYHIYCLVAMYNNGNKDGSLQCPTCK).

It belongs to the Deltex family. Interacts with NLRP4.

The protein resides in the cytoplasm. It carries out the reaction S-ubiquitinyl-[E2 ubiquitin-conjugating enzyme]-L-cysteine + [acceptor protein]-L-lysine = [E2 ubiquitin-conjugating enzyme]-L-cysteine + N(6)-ubiquitinyl-[acceptor protein]-L-lysine.. It participates in protein modification; protein ubiquitination. Functionally, regulator of Notch signaling, a signaling pathway involved in cell-cell communications that regulates a broad spectrum of cell-fate determinations. Functions as a ubiquitin ligase protein in vivo, mediating 'Lys48'-linked polyubiquitination and promoting degradation of TBK1, targeting to TBK1 requires interaction with NLRP4. In Homo sapiens (Human), this protein is E3 ubiquitin-protein ligase DTX4 (DTX4).